The sequence spans 295 residues: MKSRIEQALASAPEALSKQLAPIVLADDFDATLSAQQFEQLLSATSLSDKELRVALLPFAAAYSYAPISEFYVGAIVRGLSGRLYFGANMEFFGVQLGQTVHAEQSAISHAWMKGEHGVKDITINFSPCGHCRQFMNELSTAKELKVQLPERDEKSLHEYLPEAFGPADLGIESGLMAEVKHQFVCDDKDALIQQAVEAMNMSHAPYTNNLSGLALELANGRVFKGAYAENAAFNPSLPPLQVALIQVLLAGETFDSIKAAALVENSEGKISHLADTQSTLEALNPDIPVSFVNV.

CMP/dCMP-type deaminase domains are found at residues 48–168 (SDKE…FGPA) and 187–295 (DDKD…FVNV). Substrate is bound at residue 89–91 (NME). A Zn(2+)-binding site is contributed by His-102. The Proton donor role is filled by Glu-104. Residues Cys-129 and Cys-132 each contribute to the Zn(2+) site.

This sequence belongs to the cytidine and deoxycytidylate deaminase family. In terms of assembly, homodimer. Zn(2+) is required as a cofactor.

It carries out the reaction cytidine + H2O + H(+) = uridine + NH4(+). It catalyses the reaction 2'-deoxycytidine + H2O + H(+) = 2'-deoxyuridine + NH4(+). Functionally, this enzyme scavenges exogenous and endogenous cytidine and 2'-deoxycytidine for UMP synthesis. The chain is Cytidine deaminase from Vibrio parahaemolyticus serotype O3:K6 (strain RIMD 2210633).